A 131-amino-acid chain; its full sequence is Protein FAM107B (131 aa).

Ala2 is subject to N-acetylalanine. Disordered stretches follow at residues 39-78 and 100-131; these read MNQKRGLAPQNKPELQKVMEKRRRDQVIKQKEEEAQKKKS and KLQEEQENAPEFVKVKGNLRRTGQEVAQAQES. N6-acetyllysine is present on Lys50. Basic and acidic residues predominate over residues 52–78; that stretch reads ELQKVMEKRRRDQVIKQKEEEAQKKKS. Residues 61–112 adopt a coiled-coil conformation; that stretch reads RRDQVIKQKEEEAQKKKSDLEIELLKRQQKLEQLELEKQKLQEEQENAPEFV.

This sequence belongs to the FAM107 family.

In Rattus norvegicus (Rat), this protein is Protein FAM107B.